A 238-amino-acid polypeptide reads, in one-letter code: NADH-quinone oxidoreductase subunit C (238 aa).

The tract at residues 1–20 is disordered; that stretch reads MSSPDQNPSDAAGQTGSSNE.

It belongs to the complex I 30 kDa subunit family. In terms of assembly, NDH-1 is composed of 14 different subunits. Subunits NuoB, C, D, E, F, and G constitute the peripheral sector of the complex.

The protein localises to the cell membrane. The catalysed reaction is a quinone + NADH + 5 H(+)(in) = a quinol + NAD(+) + 4 H(+)(out). NDH-1 shuttles electrons from NADH, via FMN and iron-sulfur (Fe-S) centers, to quinones in the respiratory chain. The immediate electron acceptor for the enzyme in this species is believed to be a menaquinone. Couples the redox reaction to proton translocation (for every two electrons transferred, four hydrogen ions are translocated across the cytoplasmic membrane), and thus conserves the redox energy in a proton gradient. The protein is NADH-quinone oxidoreductase subunit C of Mycobacterium ulcerans (strain Agy99).